The following is a 387-amino-acid chain: Odorant receptor 94a (387 aa).

Residues 1–45 (MDKHKDRIESMRLILQVMQLFGLWPWSLKSEEEWTFTGFVKRNYR) lie on the Cytoplasmic side of the membrane. A helical membrane pass occupies residues 46–66 (FLLHLPITFTFIGLMWLEAFI). The Extracellular segment spans residues 67–75 (SSNLEQAGQ). A helical membrane pass occupies residues 76–96 (VLYMSITEMALVVKILSIWHY). Residues 97–133 (RTEAWRLMYELQHAPDYQLHNQEEVDFWRREQRFFKW) are Cytoplasmic-facing. A helical membrane pass occupies residues 134-154 (FFYIYILISLGVVYSGCTGVL). Residues 155–191 (FLEGYELPFAYYVPFEWQNERRYWFAYGYDMAGMTLT) are Extracellular-facing. Residues 192-212 (CISNITLDTLGCYFLFHISLL) traverse the membrane as a helical segment. Residues 213–255 (YRLLGLRLRETKNMKNDTIFGQQLRAIFIMHQRIRSLTLTCQR) lie on the Cytoplasmic side of the membrane. Residues 256 to 276 (IVSPYILSQIILSALIICFSG) form a helical membrane-spanning segment. Over 277–290 (YRLQHVGIRDNPGQ) the chain is Extracellular. Residues 291-311 (FISMLQFVSVMILQIYLPCYY) traverse the membrane as a helical segment. Residues 312 to 362 (GNEITVYANQLTNEVYHTNWLECRPPIRKLLNAYMEHLKKPVTIRAGNFFA) are Cytoplasmic-facing. Residues 363–383 (VGLPIFVKTINNAYSFLALLL) form a helical membrane-spanning segment. An N-linked (GlcNAc...) asparagine glycan is attached at Asn-384. At 384 to 387 (NVSN) the chain is on the extracellular side.

This sequence belongs to the insect chemoreceptor superfamily. Heteromeric odorant receptor channel (TC 1.A.69) family. Or2a subfamily. In terms of assembly, interacts with Orco. Complexes exist early in the endomembrane system in olfactory sensory neurons (OSNs), coupling these complexes to the conserved ciliary trafficking pathway.

Its subcellular location is the cell membrane. Functionally, odorant receptor which mediates acceptance or avoidance behavior, depending on its substrates. The odorant receptor repertoire encodes a large collection of odor stimuli that vary widely in identity, intensity, and duration. May form a complex with Orco to form odorant-sensing units, providing sensitive and prolonged odorant signaling and calcium permeability. The polypeptide is Odorant receptor 94a (Or94a) (Drosophila melanogaster (Fruit fly)).